Here is a 38-residue protein sequence, read N- to C-terminus: Photosystem II reaction center protein L (38 aa).

Residues 17–37 (SLYWGLLLMFVLAVLFSSYFF) form a helical membrane-spanning segment.

Belongs to the PsbL family. In terms of assembly, PSII is composed of 1 copy each of membrane proteins PsbA, PsbB, PsbC, PsbD, PsbE, PsbF, PsbH, PsbI, PsbJ, PsbK, PsbL, PsbM, PsbT, PsbX, PsbY, PsbZ, Psb30/Ycf12, at least 3 peripheral proteins of the oxygen-evolving complex and a large number of cofactors. It forms dimeric complexes.

It is found in the plastid. It localises to the chloroplast thylakoid membrane. Its function is as follows. One of the components of the core complex of photosystem II (PSII). PSII is a light-driven water:plastoquinone oxidoreductase that uses light energy to abstract electrons from H(2)O, generating O(2) and a proton gradient subsequently used for ATP formation. It consists of a core antenna complex that captures photons, and an electron transfer chain that converts photonic excitation into a charge separation. This subunit is found at the monomer-monomer interface and is required for correct PSII assembly and/or dimerization. In Emiliania huxleyi (Coccolithophore), this protein is Photosystem II reaction center protein L.